Consider the following 171-residue polypeptide: Protein hunchback (171 aa).

Disordered stretches follow at residues 14–93 and 124–171; these read PMSH…PMQI and SNDK…KYMA. Positions 17 to 31 are enriched in basic residues; the sequence is HHHHHSHHSHGHHHS. 2 stretches are compositionally biased toward low complexity: residues 32 to 42 and 52 to 80; these read NSNSNASSPRQ and SSSN…DTPL. A compositionally biased stretch (basic and acidic residues) spans 152-171; sequence EPEKDHDLMSNSSEDMKYMA.

It belongs to the hunchback C2H2-type zinc-finger protein family.

Its subcellular location is the nucleus. Functionally, gap class segmentation protein that controls development of head structures. The protein is Protein hunchback (hb) of Scaptomyza albovittata (Fruit fly).